Here is a 157-residue protein sequence, read N- to C-terminus: 2-C-methyl-D-erythritol 2,4-cyclodiphosphate synthase (157 aa).

Residues aspartate 8 and histidine 10 each coordinate a divalent metal cation. 4-CDP-2-C-methyl-D-erythritol 2-phosphate contacts are provided by residues 8–10 (DVH) and 34–35 (HS). Histidine 42 is a binding site for a divalent metal cation. 4-CDP-2-C-methyl-D-erythritol 2-phosphate is bound by residues 56-58 (DIG), 61-65 (FPDTD), 100-106 (AQAPKMA), 132-135 (TTTE), phenylalanine 139, and arginine 142.

The protein belongs to the IspF family. As to quaternary structure, homotrimer. A divalent metal cation serves as cofactor.

It carries out the reaction 4-CDP-2-C-methyl-D-erythritol 2-phosphate = 2-C-methyl-D-erythritol 2,4-cyclic diphosphate + CMP. The protein operates within isoprenoid biosynthesis; isopentenyl diphosphate biosynthesis via DXP pathway; isopentenyl diphosphate from 1-deoxy-D-xylulose 5-phosphate: step 4/6. Functionally, involved in the biosynthesis of isopentenyl diphosphate (IPP) and dimethylallyl diphosphate (DMAPP), two major building blocks of isoprenoid compounds. Catalyzes the conversion of 4-diphosphocytidyl-2-C-methyl-D-erythritol 2-phosphate (CDP-ME2P) to 2-C-methyl-D-erythritol 2,4-cyclodiphosphate (ME-CPP) with a corresponding release of cytidine 5-monophosphate (CMP). The sequence is that of 2-C-methyl-D-erythritol 2,4-cyclodiphosphate synthase from Pseudomonas aeruginosa (strain UCBPP-PA14).